Consider the following 428-residue polypeptide: Trigger factor (428 aa).

The 86-residue stretch at 163–248 (GDMVVIDYKG…VHEIKEKELP (86 aa)) folds into the PPIase FKBP-type domain.

Belongs to the FKBP-type PPIase family. Tig subfamily.

It localises to the cytoplasm. It carries out the reaction [protein]-peptidylproline (omega=180) = [protein]-peptidylproline (omega=0). In terms of biological role, involved in protein export. Acts as a chaperone by maintaining the newly synthesized protein in an open conformation. Functions as a peptidyl-prolyl cis-trans isomerase. The protein is Trigger factor of Alkaliphilus metalliredigens (strain QYMF).